Here is a 104-residue protein sequence, read N- to C-terminus: Large ribosomal subunit protein uL24 (104 aa).

Belongs to the universal ribosomal protein uL24 family. In terms of assembly, part of the 50S ribosomal subunit.

Functionally, one of two assembly initiator proteins, it binds directly to the 5'-end of the 23S rRNA, where it nucleates assembly of the 50S subunit. Its function is as follows. One of the proteins that surrounds the polypeptide exit tunnel on the outside of the subunit. This chain is Large ribosomal subunit protein uL24, found in Methylorubrum extorquens (strain PA1) (Methylobacterium extorquens).